The primary structure comprises 653 residues: MSQYAAELCKLLITDNFGELYALIFIYLLNHGRQPLPRIVQNTHLSPRQVRHGLAVLVQQHLVFHCTSLDDGITYYESNWRSAYNLVRSGKIIQLVEERLGNRAASIVSTLLALGHAKISYLESLPELQPGHERPVKANGINGVHGGEGEDVNGVDNDAENHTDHAHDYQQDGPVREPNGYHDSDPGLQVQTILQQLAAFGFITRVRNQHFQSPEDNFDAALKAAKSNGDSYGLKGNKLEAKLTEDAEKLVKEWTDGRISRALPSASLLRGVKRRLRKDDSSAPRKRLKLDGPLEDDVKDEDDGDDFSDDDYHNDEMAALDPNMVIRVNYEKFNVALRNRRLIELADQNGSAVTSQVYETLLSHIEVQTPTCREHVEAIPEGEEAEQYSVSIRLDTISRDLDIDLDLAGVIAGIIPDNINGIKEDEDDEDEEGGPVSMKRRGPSRNYLVDQHLSFLAAEPSFFCTRRMQAGMITWAVEYRHLAKKLRHLELERLIEARFGGFAVRIVRVLAAKGKLDEKRLQEISLMASKDLRQILGQMASAGFVELQEVPRDAQRQPSRTMYLWFYDPDRVRFMVIEDTYKSMSRCLQRIRVEREKLKFLLEKTERSDVKGNEDRYLSAAELQTLKEWRDTEKLLLGEVARLDELVAVLRDY.

Disordered stretches follow at residues 141–186 (INGV…DSDP), 280–309 (DSSA…DFSD), and 422–442 (IKED…KRRG). The segment covering 159–170 (AENHTDHAHDYQ) has biased composition (basic and acidic residues). Acidic residues-rich tracts occupy residues 293 to 309 (PLED…DFSD) and 424 to 433 (EDEDDEDEEG). A leucine-zipper region spans residues 580-601 (TYKSMSRCLQRIRVEREKLKFL).

The protein belongs to the RNA polymerase beta chain family. Component of the RNA polymerase III (Pol III) complex consisting of 17 subunits.

Its subcellular location is the nucleus. DNA-dependent RNA polymerase catalyzes the transcription of DNA into RNA using the four ribonucleoside triphosphates as substrates. Specific core component of RNA polymerase III which synthesizes small RNAs, such as 5S rRNA and tRNAs. This is DNA-directed RNA polymerase III subunit RPC-3 (RPC-82) from Coccidioides immitis (strain RS) (Valley fever fungus).